The following is a 205-amino-acid chain: Outer-membrane lipoprotein LolB (205 aa).

A signal peptide spans 1–17 (MFLRHFIVFSFIALLAG). Residue Cys-18 is the site of N-palmitoyl cysteine attachment. Residue Cys-18 is the site of S-diacylglycerol cysteine attachment.

It belongs to the LolB family. Monomer.

It is found in the cell outer membrane. Functionally, plays a critical role in the incorporation of lipoproteins in the outer membrane after they are released by the LolA protein. This chain is Outer-membrane lipoprotein LolB, found in Pseudomonas fluorescens (strain ATCC BAA-477 / NRRL B-23932 / Pf-5).